The sequence spans 967 residues: Vacuolar membrane protease (967 aa).

Over 1–16 (MARPSLSRSNPLGFTP) the chain is Cytoplasmic. The chain crosses the membrane as a helical span at residues 17–37 (WPVTVITAVVYLALVVPLLVV). The Vacuolar segment spans residues 38–387 (HHVVPSAPSS…SAFVVFELHT (350 aa)). 2 N-linked (GlcNAc...) asparagine glycosylation sites follow: Asn53 and Asn119. The Zn(2+) site is built by His171 and Asp183. The active-site Proton acceptor is the Glu217. Residues Glu218, Glu243, and His316 each coordinate Zn(2+). Residues 388–408 (LFALSVTLLVVAPLVLLVTSI) form a helical membrane-spanning segment. The Cytoplasmic portion of the chain corresponds to 409-441 (ALNRADKMYLFRASASPEDSDGSEAVLLHGVRG). The helical transmembrane segment at 442–462 (FFRFPFLLVIPTAVTVGLAYL) threads the bilayer. At 463-472 (VTKFNPYIIH) the chain is on the vacuolar side. Residues 473–493 (SSEYAVWSMMISAWVFLAWFV) form a helical membrane-spanning segment. The Cytoplasmic portion of the chain corresponds to 494-507 (SRVADFARPSAFHR). A helical transmembrane segment spans residues 508–528 (VYTLTWLFLVEWVLLVISTVY). Residues 529–532 (ENKY) lie on the Vacuolar side of the membrane. The chain crosses the membrane as a helical span at residues 533 to 553 (GLAGGYFVFFAFAGTFLATWI). Residues 554 to 663 (SYLELFALPR…WSIHLPKWVW (110 aa)) are Cytoplasmic-facing. A disordered region spans residues 579–612 (SSHGSRLGTASGEDVEDGEDEDEDDDGTTAEATE). The span at 591–606 (EDVEDGEDEDEDDDGT) shows a compositional bias: acidic residues. The helical transmembrane segment at 664 to 684 (VLQFLLTAPLVLTFVGPLALL) threads the bilayer. Over 685–700 (LTSALRQTGQDGSSSL) the chain is Vacuolar. The chain crosses the membrane as a helical span at residues 701-721 (FIYIAVAALTTLLFIPLLPFI). Residues 722–727 (HRYTHH) are Cytoplasmic-facing. Residues 728-748 (IPLFLLCVFAGTLIYNLVAFP) form a helical membrane-spanning segment. Over 749-967 (FSPANRLKLF…LVEGSRRFEI (219 aa)) the chain is Vacuolar. 2 N-linked (GlcNAc...) asparagine glycosylation sites follow: Asn795 and Asn832.

Belongs to the peptidase M28 family. It depends on Zn(2+) as a cofactor.

The protein resides in the vacuole membrane. In terms of biological role, may be involved in vacuolar sorting and osmoregulation. In Neosartorya fischeri (strain ATCC 1020 / DSM 3700 / CBS 544.65 / FGSC A1164 / JCM 1740 / NRRL 181 / WB 181) (Aspergillus fischerianus), this protein is Vacuolar membrane protease.